A 274-amino-acid polypeptide reads, in one-letter code: 2,3,4,5-tetrahydropyridine-2,6-dicarboxylate N-succinyltransferase (274 aa).

It belongs to the transferase hexapeptide repeat family.

It localises to the cytoplasm. It carries out the reaction (S)-2,3,4,5-tetrahydrodipicolinate + succinyl-CoA + H2O = (S)-2-succinylamino-6-oxoheptanedioate + CoA. It functions in the pathway amino-acid biosynthesis; L-lysine biosynthesis via DAP pathway; LL-2,6-diaminopimelate from (S)-tetrahydrodipicolinate (succinylase route): step 1/3. In Klebsiella pneumoniae (strain 342), this protein is 2,3,4,5-tetrahydropyridine-2,6-dicarboxylate N-succinyltransferase.